The primary structure comprises 459 residues: Putrescine aminotransferase (459 aa).

Residues 150 to 151 and Q274 each bind pyridoxal 5'-phosphate; that span reads GT. Position 300 is an N6-(pyridoxal phosphate)lysine (K300). Residue T332 participates in pyridoxal 5'-phosphate binding.

The protein belongs to the class-III pyridoxal-phosphate-dependent aminotransferase family. Putrescine aminotransferase subfamily. It depends on pyridoxal 5'-phosphate as a cofactor.

The enzyme catalyses an alkane-alpha,omega-diamine + 2-oxoglutarate = an omega-aminoaldehyde + L-glutamate. It carries out the reaction putrescine + 2-oxoglutarate = 1-pyrroline + L-glutamate + H2O. The catalysed reaction is cadaverine + 2-oxoglutarate = 5-aminopentanal + L-glutamate. The protein operates within amine and polyamine degradation; putrescine degradation; 4-aminobutanal from putrescine (transaminase route): step 1/1. Its function is as follows. Catalyzes the aminotransferase reaction from putrescine to 2-oxoglutarate, leading to glutamate and 4-aminobutanal, which spontaneously cyclizes to form 1-pyrroline. This is the first step in one of two pathways for putrescine degradation, where putrescine is converted into 4-aminobutanoate (gamma-aminobutyrate or GABA) via 4-aminobutanal. Also functions as a cadaverine transaminase in a a L-lysine degradation pathway to succinate that proceeds via cadaverine, glutarate and L-2-hydroxyglutarate. The polypeptide is Putrescine aminotransferase (Shigella boydii serotype 4 (strain Sb227)).